Consider the following 726-residue polypeptide: Ribonuclease R (726 aa).

An RNB domain is found at 264–592; it reads RKDLTELAFV…TVHRLLWMNL (329 aa). Positions 645-726 constitute an S1 motif domain; sequence GQTFHGFISA…VQKRAILTLV (82 aa).

Belongs to the RNR ribonuclease family. RNase R subfamily.

It is found in the cytoplasm. The catalysed reaction is Exonucleolytic cleavage in the 3'- to 5'-direction to yield nucleoside 5'-phosphates.. In terms of biological role, 3'-5' exoribonuclease that releases 5'-nucleoside monophosphates and is involved in maturation of structured RNAs. The sequence is that of Ribonuclease R from Mycoplasma pneumoniae (strain ATCC 29342 / M129 / Subtype 1) (Mycoplasmoides pneumoniae).